We begin with the raw amino-acid sequence, 440 residues long: Heat stress transcription factor A-4b (440 aa).

The stretch at 121–181 forms a coiled coil; sequence NERKDYEEEI…QRSLISYVRE (61 aa). Residues 133–183 are hydrophobic repeat HR-A/B; the sequence is LKSDNAALSSELQNNTLKKLNMEKRMQALEEKLFVVEDQQRSLISYVREIV. Residues 158–163 carry the Nuclear export signal motif; the sequence is MQALEE. A Nuclear localization signal motif is present at residues 200–204; that stretch reads RKKRR. Residues 264–417 are disordered; that stretch reads DISYDDGVPG…EMKSGDRQHL (154 aa). Over residues 295-305 the composition is skewed to polar residues; that stretch reads SPPTRMRTSSA. Positions 333–343 are enriched in basic and acidic residues; sequence SRVDTRAKVSE. An AHA motif is present at residues 375-384; sequence DGFWQQFLTE. Residues 380–390 show a composition bias toward polar residues; that stretch reads QFLTEQPGSSD. Residues 391 to 417 are compositionally biased toward basic and acidic residues; the sequence is AHQEAQSERRDGGNKVDEMKSGDRQHL.

The protein belongs to the HSF family. Class A subfamily. Homotrimer. Exhibits temperature-dependent phosphorylation.

Its subcellular location is the cytoplasm. The protein resides in the nucleus. Its function is as follows. Transcriptional regulator that specifically binds DNA of heat shock promoter elements (HSE). This chain is Heat stress transcription factor A-4b (HSFA4B), found in Oryza sativa subsp. japonica (Rice).